The chain runs to 397 residues: DNA-directed RNA polymerase subunit Rpo1C (397 aa).

This sequence belongs to the RNA polymerase beta' chain family. As to quaternary structure, part of the RNA polymerase complex.

Its subcellular location is the cytoplasm. It carries out the reaction RNA(n) + a ribonucleoside 5'-triphosphate = RNA(n+1) + diphosphate. Functionally, DNA-dependent RNA polymerase (RNAP) catalyzes the transcription of DNA into RNA using the four ribonucleoside triphosphates as substrates. Forms part of the jaw domain. The protein is DNA-directed RNA polymerase subunit Rpo1C of Methanococcus aeolicus (strain ATCC BAA-1280 / DSM 17508 / OCM 812 / Nankai-3).